The sequence spans 213 residues: 3,4-dihydroxy-2-butanone 4-phosphate synthase (213 aa).

D-ribulose 5-phosphate is bound by residues 27 to 28 (RE), aspartate 32, 140 to 144 (RTGHT), and glutamate 164. Glutamate 28 serves as a coordination point for Mg(2+). Histidine 143 contributes to the Mg(2+) binding site.

The protein belongs to the DHBP synthase family. In terms of assembly, homodimer. The cofactor is Mg(2+). Mn(2+) is required as a cofactor.

It carries out the reaction D-ribulose 5-phosphate = (2S)-2-hydroxy-3-oxobutyl phosphate + formate + H(+). It functions in the pathway cofactor biosynthesis; riboflavin biosynthesis; 2-hydroxy-3-oxobutyl phosphate from D-ribulose 5-phosphate: step 1/1. Functionally, catalyzes the conversion of D-ribulose 5-phosphate to formate and 3,4-dihydroxy-2-butanone 4-phosphate. This is 3,4-dihydroxy-2-butanone 4-phosphate synthase from Agrobacterium fabrum (strain C58 / ATCC 33970) (Agrobacterium tumefaciens (strain C58)).